The chain runs to 67 residues: Large ribosomal subunit protein bL31 (67 aa).

This sequence belongs to the bacterial ribosomal protein bL31 family. Type A subfamily. Part of the 50S ribosomal subunit.

Functionally, binds the 23S rRNA. The chain is Large ribosomal subunit protein bL31 from Helicobacter acinonychis (strain Sheeba).